The following is a 184-amino-acid chain: Ribosome maturation factor RimM (184 aa).

Residues 112–184 (TDSYYWIDLI…SNKTISLDWQ (73 aa)) enclose the PRC barrel domain.

Belongs to the RimM family. As to quaternary structure, binds ribosomal protein uS19.

Its subcellular location is the cytoplasm. An accessory protein needed during the final step in the assembly of 30S ribosomal subunit, possibly for assembly of the head region. Essential for efficient processing of 16S rRNA. May be needed both before and after RbfA during the maturation of 16S rRNA. It has affinity for free ribosomal 30S subunits but not for 70S ribosomes. The chain is Ribosome maturation factor RimM from Polynucleobacter necessarius subsp. necessarius (strain STIR1).